Reading from the N-terminus, the 212-residue chain is Pyridoxine/pyridoxamine 5'-phosphate oxidase (212 aa).

Substrate contacts are provided by residues 8–11 (RREY) and Lys-66. FMN is bound by residues 61–66 (RIVLLK), 76–77 (FT), Arg-82, Lys-83, and Gln-105. Residues Tyr-123, Arg-127, and Ser-131 each contribute to the substrate site. Residues 140–141 (QS) and Trp-185 contribute to the FMN site. Residue 191 to 193 (RLH) participates in substrate binding. Arg-195 lines the FMN pocket.

Belongs to the pyridoxamine 5'-phosphate oxidase family. Homodimer. FMN serves as cofactor.

The catalysed reaction is pyridoxamine 5'-phosphate + O2 + H2O = pyridoxal 5'-phosphate + H2O2 + NH4(+). It catalyses the reaction pyridoxine 5'-phosphate + O2 = pyridoxal 5'-phosphate + H2O2. It functions in the pathway cofactor metabolism; pyridoxal 5'-phosphate salvage; pyridoxal 5'-phosphate from pyridoxamine 5'-phosphate: step 1/1. Its pathway is cofactor metabolism; pyridoxal 5'-phosphate salvage; pyridoxal 5'-phosphate from pyridoxine 5'-phosphate: step 1/1. In terms of biological role, catalyzes the oxidation of either pyridoxine 5'-phosphate (PNP) or pyridoxamine 5'-phosphate (PMP) into pyridoxal 5'-phosphate (PLP). The chain is Pyridoxine/pyridoxamine 5'-phosphate oxidase from Shewanella sp. (strain MR-7).